A 218-amino-acid chain; its full sequence is Large ribosomal subunit protein bL25 (218 aa).

Residues 187-218 (SATAAVEEAKEDGAPEESAQGQGAAEAQETNK) form a disordered region. Positions 202-218 (EESAQGQGAAEAQETNK) are enriched in low complexity.

This sequence belongs to the bacterial ribosomal protein bL25 family. CTC subfamily. Part of the 50S ribosomal subunit; part of the 5S rRNA/L5/L18/L25 subcomplex. Contacts the 5S rRNA. Binds to the 5S rRNA independently of L5 and L18.

In terms of biological role, this is one of the proteins that binds to the 5S RNA in the ribosome where it forms part of the central protuberance. This is Large ribosomal subunit protein bL25 from Anaplasma marginale (strain St. Maries).